The primary structure comprises 119 residues: Large ribosomal subunit protein bL12 (119 aa).

It belongs to the bacterial ribosomal protein bL12 family. As to quaternary structure, homodimer. Part of the ribosomal stalk of the 50S ribosomal subunit. Forms a multimeric L10(L12)X complex, where L10 forms an elongated spine to which 2 to 4 L12 dimers bind in a sequential fashion. Binds GTP-bound translation factors.

Forms part of the ribosomal stalk which helps the ribosome interact with GTP-bound translation factors. Is thus essential for accurate translation. The polypeptide is Large ribosomal subunit protein bL12 (Bacillus anthracis (strain A0248)).